Here is a 254-residue protein sequence, read N- to C-terminus: Cell division protein DivIB (254 aa).

At Met1–Lys21 the chain is on the cytoplasmic side. A helical membrane pass occupies residues Ile22–Ser42. Residues Leu43–Gln254 lie on the Extracellular side of the membrane. The POTRA domain occupies Ser44–Phe112.

It belongs to the FtsQ/DivIB family. DivIB subfamily.

It is found in the cell membrane. Its function is as follows. Cell division protein that may be involved in stabilizing or promoting the assembly of the division complex. In Paenibacillus polymyxa (strain E681), this protein is Cell division protein DivIB.